Reading from the N-terminus, the 3598-residue chain is Dystrophin, isoforms A/C/F/G/H (3598 aa).

The tract at residues 1 to 230 (MEPGILIDER…YVMCLYHAME (230 aa)) is actin-binding. Calponin-homology (CH) domains are found at residues 12-116 (HIQK…LEFN) and 127-230 (NGVE…HAME). Residues 233–297 (RTRQQEQEQD…SGELKTHSMR (65 aa)) are disordered. Residues 267 to 286 (NDQTSLGLYTSDSAGSMEQR) show a composition bias toward polar residues. Spectrin repeat units lie at residues 307 to 420 (VEIS…KILM), 423 to 525 (AEFQ…KLQQ), 851 to 963 (QDFG…AIEN), 1056 to 1170 (SHID…LLEH), 1173 to 1275 (TQLG…LLEQ), and 1381 to 1483 (SYES…TLER). 5 disordered regions span residues 1633 to 1696 (ARNT…VMPD), 1716 to 1742 (SLNPQKVTNTPPPKPAKTKRKAPSSPA), 1799 to 1854 (EDSD…ENTS), 1878 to 1941 (RDIL…EPLV), and 2204 to 2233 (GPRISNGKERPDASSAATMSCRSEYNNEPS). Residues 1663 to 1679 (SGESPSSAHTSSSESPT) show a composition bias toward low complexity. The span at 1803 to 1816 (SSVRVDSQGKEMRR) shows a compositional bias: basic and acidic residues. Phosphoserine occurs at positions 1832 and 1838. Over residues 1834–1843 (NDEDSAEQEE) the composition is skewed to acidic residues. Residues 1878–1893 (RDILRDSEEEEPKTPD) are compositionally biased toward basic and acidic residues. Positions 2218–2233 (SAATMSCRSEYNNEPS) are enriched in polar residues. Spectrin repeat units follow at residues 2237–2363 (ALAG…QLKN), 2366–2472 (SDSQ…QLHA), 2475–2576 (HSLQ…RLES), 2579–2712 (EHWN…RLDE), and 2715–2819 (TKMR…VLCQ). The disordered stretch occupies residues 2655-2679 (VSDTSDTEANHDSDSRYMSAEEQSR). Residues 2822 to 2852 (AQQTHENGDDGRTTSNSGTIGPLPNLGQSVK) form a disordered region. The region spanning 2849-2882 (QSVKPPWERATTAANVPYYIDHERETTHWDHPEM) is the WW domain. The ZZ-type zinc-finger motif lies at 3107-3163 (KHQAKCNICKEYPIVGFRYRCLKCFNFDMCQKCFFFGRNAKNHKLTHPMHEYCTTTT). Residues Cys3112, Cys3115, Cys3127, Cys3130, Cys3136, Cys3139, His3149, and His3153 each contribute to the Zn(2+) site. Ser3207 carries the post-translational modification Phosphoserine. 4 disordered regions span residues 3316 to 3344 (EQSGMPEDSNGMQHSSSSMTGLSGQGEQG), 3387 to 3449 (DEPN…KGIM), 3483 to 3545 (LHQQ…QQHL), and 3560 to 3598 (ELESINDDLEDSSSSNTTNTTTTTTTTATTEKTCVELQK). 2 stretches are compositionally biased toward polar residues: residues 3325-3337 (NGMQHSSSSMTGL) and 3408-3439 (ALNSKPNTLQTRSVTASQLNTDSPAKMNQQNG). The span at 3485–3499 (QQQQQQLQQQPPQQQ) shows a compositional bias: low complexity. The segment covering 3505–3523 (GNGGMDISGGMQTSGGYLG) has biased composition (gly residues). Residues 3534-3545 (SSLMQQQHQQHL) show a composition bias toward low complexity. Residues 3560–3570 (ELESINDDLED) are compositionally biased toward acidic residues. Low complexity predominate over residues 3571–3589 (SSSSNTTNTTTTTTTTATT).

In terms of assembly, component of the dystrophin associated protein complex (DAPC). Interacts with Dg, via the Dg WW domain binding sites. As to expression, isoform A, isoform F and isoform G are expressed in the midgut endoderm of stage 12 embryos. In stage 16 embryos, expression is also seen in the pericardial cells, cells at the ectoderm segmental border and cells along the midline of the CNS. During embryogenesis, isoform A is also expressed in the visceral mesoderm, muscle attachment sites, mesectodermal cells at the midline, the gut, and throughout muscle fibers. In larvae, isoform A is found in all muscle fibers, but not detectable in the brain or neuropil.

The protein resides in the cell membrane. Its subcellular location is the sarcolemma. The protein localises to the cytoplasm. It localises to the cytoskeleton. Functionally, required for the maintenance of appropriate synaptic retrograde communication and the stabilization of muscle cell architecture or physiology. Both det and Dg are required for maintenance of early dpp signaling in the presumptive crossvein. Isoform A is not required to maintain muscle integrity, but plays a role in neuromuscular homeostasis by regulating neurotransmitter release. May play a role in anchoring the cytoskeleton to the plasma membrane. This Drosophila melanogaster (Fruit fly) protein is Dystrophin, isoforms A/C/F/G/H (Dys).